The sequence spans 312 residues: D-alanine--D-alanine ligase (312 aa).

The ATP-grasp domain occupies Lys108–Ser308. An ATP-binding site is contributed by Val138–Tyr193. Mg(2+) contacts are provided by Asp262, Glu275, and Asn277.

The protein belongs to the D-alanine--D-alanine ligase family. The cofactor is Mg(2+). Requires Mn(2+) as cofactor.

Its subcellular location is the cytoplasm. The enzyme catalyses 2 D-alanine + ATP = D-alanyl-D-alanine + ADP + phosphate + H(+). The protein operates within cell wall biogenesis; peptidoglycan biosynthesis. Functionally, cell wall formation. This is D-alanine--D-alanine ligase from Burkholderia thailandensis (strain ATCC 700388 / DSM 13276 / CCUG 48851 / CIP 106301 / E264).